The sequence spans 201 residues: Small ribosomal subunit protein uS4 (201 aa).

The S4 RNA-binding domain occupies 103 to 167 (RRLQTIVTKK…SKIPQVLEKT (65 aa)). The disordered stretch occupies residues 163–201 (VLEKTKSEAPAEETVEAPAEETVEAPAEEKKEESPSTES). Positions 172 to 185 (PAEETVEAPAEETV) are enriched in acidic residues. Over residues 189-201 (AEEKKEESPSTES) the composition is skewed to basic and acidic residues.

The protein belongs to the universal ribosomal protein uS4 family. As to quaternary structure, part of the 30S ribosomal subunit. Contacts protein S5. The interaction surface between S4 and S5 is involved in control of translational fidelity.

Its function is as follows. One of the primary rRNA binding proteins, it binds directly to 16S rRNA where it nucleates assembly of the body of the 30S subunit. With S5 and S12 plays an important role in translational accuracy. The chain is Small ribosomal subunit protein uS4 from Nitrosopumilus maritimus (strain SCM1).